Here is a 416-residue protein sequence, read N- to C-terminus: Gamma-glutamyl phosphate reductase (416 aa).

It belongs to the gamma-glutamyl phosphate reductase family.

It localises to the cytoplasm. It catalyses the reaction L-glutamate 5-semialdehyde + phosphate + NADP(+) = L-glutamyl 5-phosphate + NADPH + H(+). The protein operates within amino-acid biosynthesis; L-proline biosynthesis; L-glutamate 5-semialdehyde from L-glutamate: step 2/2. Functionally, catalyzes the NADPH-dependent reduction of L-glutamate 5-phosphate into L-glutamate 5-semialdehyde and phosphate. The product spontaneously undergoes cyclization to form 1-pyrroline-5-carboxylate. The protein is Gamma-glutamyl phosphate reductase of Salmonella paratyphi C (strain RKS4594).